The chain runs to 179 residues: MKVHEANQGLTLPGSVVAIGAFDGVHQGHQAVLRQAVERSRQLGVESVAYTIDPPPRCRFQGSRMLTTLQEKLDRFAVLGLNHAVVAHFDERYAARRVDAFIRELTALNPREVIVGQDFRFGRNREGDVALLRRHFPVRIVQTVCCADGQRISSTRIRELIERGEWEQSTVLLGWPLSS.

This sequence belongs to the RibF family.

The catalysed reaction is riboflavin + ATP = FMN + ADP + H(+). It catalyses the reaction FMN + ATP + H(+) = FAD + diphosphate. It functions in the pathway cofactor biosynthesis; FAD biosynthesis; FAD from FMN: step 1/1. Its pathway is cofactor biosynthesis; FMN biosynthesis; FMN from riboflavin (ATP route): step 1/1. Catalyzes the phosphorylation of riboflavin to FMN followed by the adenylation of FMN to FAD. The chain is Putative bifunctional riboflavin kinase/FMN adenylyltransferase (ribF) from Geobacillus thermodenitrificans (strain NG80-2).